A 500-amino-acid chain; its full sequence is Cytochrome P450 71B22 (500 aa).

The chain crosses the membrane as a helical span at residues 1 to 21 (MSISLYFLLLLPLFLIFFKKL). Cysteine 441 contacts heme.

Belongs to the cytochrome P450 family. Heme serves as cofactor.

The protein localises to the membrane. The polypeptide is Cytochrome P450 71B22 (CYP71B22) (Arabidopsis thaliana (Mouse-ear cress)).